A 439-amino-acid polypeptide reads, in one-letter code: GTPase Obg (439 aa).

One can recognise an Obg domain in the interval Met1–Leu159. Positions Ala160 to Ala336 constitute an OBG-type G domain. Residues Gly166–Ser173, Phe191–Ser195, Asp213–Gly216, Thr283–Asp286, and Ser317–Ile319 each bind GTP. Positions 173 and 193 each coordinate Mg(2+). Residues Ala338–Tyr357 are disordered. Basic and acidic residues predominate over residues Tyr344–Glu354. The region spanning Thr358 to Glu439 is the OCT domain.

It belongs to the TRAFAC class OBG-HflX-like GTPase superfamily. OBG GTPase family. In terms of assembly, monomer. The cofactor is Mg(2+).

The protein localises to the cytoplasm. In terms of biological role, an essential GTPase which binds GTP, GDP and possibly (p)ppGpp with moderate affinity, with high nucleotide exchange rates and a fairly low GTP hydrolysis rate. Plays a role in control of the cell cycle, stress response, ribosome biogenesis and in those bacteria that undergo differentiation, in morphogenesis control. In Leuconostoc mesenteroides subsp. mesenteroides (strain ATCC 8293 / DSM 20343 / BCRC 11652 / CCM 1803 / JCM 6124 / NCDO 523 / NBRC 100496 / NCIMB 8023 / NCTC 12954 / NRRL B-1118 / 37Y), this protein is GTPase Obg.